We begin with the raw amino-acid sequence, 89 residues long: Putative regulatory protein CLH_1161 (89 aa).

This sequence belongs to the RemA family.

The chain is Putative regulatory protein CLH_1161 from Clostridium botulinum (strain Alaska E43 / Type E3).